The primary structure comprises 198 residues: Pyridoxal 5'-phosphate synthase subunit PdxT (198 aa).

Position 52 to 54 (52 to 54 (GES)) interacts with L-glutamine. The Nucleophile role is filled by Cys84. L-glutamine is bound by residues Arg115 and 143–144 (IR). Catalysis depends on charge relay system residues His179 and Glu181.

The protein belongs to the glutaminase PdxT/SNO family. As to quaternary structure, in the presence of PdxS, forms a dodecamer of heterodimers. Only shows activity in the heterodimer.

It carries out the reaction aldehydo-D-ribose 5-phosphate + D-glyceraldehyde 3-phosphate + L-glutamine = pyridoxal 5'-phosphate + L-glutamate + phosphate + 3 H2O + H(+). The enzyme catalyses L-glutamine + H2O = L-glutamate + NH4(+). It participates in cofactor biosynthesis; pyridoxal 5'-phosphate biosynthesis. Its function is as follows. Catalyzes the hydrolysis of glutamine to glutamate and ammonia as part of the biosynthesis of pyridoxal 5'-phosphate. The resulting ammonia molecule is channeled to the active site of PdxS. This Methanococcoides burtonii (strain DSM 6242 / NBRC 107633 / OCM 468 / ACE-M) protein is Pyridoxal 5'-phosphate synthase subunit PdxT.